The following is a 478-amino-acid chain: MIEVLLVTICLAVFPYPGSSIILESGNVDDYEVVYPQKLTALPKGAVQPKYEDAMQYEFKVNGEPVVLHLEKNKGLFSEDYSETHYSPDGREITTYPSVEDHCYYHGRIQNDADSTASISACDGLKGYFKLQGETYLIEPLELSDSEAHAVFKYENVEKEDEAPKMCGVTQNWESDESIKKASQLYLTPEQQRFPQRYIELAIVVDHGMYTKYSSNFKKIRKRVHQMVNNINEMYRPLNIAITLSLLDVWSEKDLITMQAVAPTTARLFGDWRETVLLKQKDHDHAQLLTDINFTGNTIGWAYMGGMCNAKNSVGIVKDHSSNVFMVAVTMTHEIGHNLGMEHDDKDKCKCEACIMSAVISDKPSKLFSDCSKDYYQTFLTNSKPQCIINAPLRTDTVSTPVSGNEFLEAGEECDCGSPSNPCCDAATCKLRPGAQCADGLCCDQCRFKKKRTICRRARGDNPDDRCTGQSADCPRNS.

The first 20 residues, 1–20 (MIEVLLVTICLAVFPYPGSS), serve as a signal peptide directing secretion. Positions 21–190 (IILESGNVDD…KASQLYLTPE (170 aa)) are excised as a propeptide. Gln191 carries the pyrrolidone carboxylic acid modification. The 196-residue stretch at 197–392 (RYIELAIVVD…SKPQCIINAP (196 aa)) folds into the Peptidase M12B domain. Ca(2+)-binding residues include Glu200 and Asp284. 3 disulfides stabilise this stretch: Cys308-Cys387, Cys349-Cys371, and Cys351-Cys354. Zn(2+) is bound at residue His333. Glu334 is a catalytic residue. Positions 337 and 343 each coordinate Zn(2+). Ca(2+) contacts are provided by Cys387 and Asn390. The propeptide occupies 393-410 (LRTDTVSTPVSGNEFLEA). A Disintegrin domain is found at 400-478 (TPVSGNEFLE…GQSADCPRNS (79 aa)). 6 cysteine pairs are disulfide-bonded: Cys414–Cys429, Cys416–Cys424, Cys423–Cys446, Cys437–Cys443, Cys442–Cys467, and Cys455–Cys474. The short motif at 459 to 461 (RGD) is the Cell attachment site element. Residues 459–478 (RGDNPDDRCTGQSADCPRNS) are disordered. The span at 468-478 (TGQSADCPRNS) shows a compositional bias: polar residues.

Belongs to the venom metalloproteinase (M12B) family. P-II subfamily. P-IIa sub-subfamily. Monomer. Zn(2+) serves as cofactor. In terms of processing, not N-glycosylated. Expressed by the venom gland.

The protein localises to the secreted. It carries out the reaction Cleavage of 3-Asn-|-Gln-4, 10-His-|-Leu-11 and 14-Ala-|-Leu-15 in the insulin B chain, and the bond Z-Gly-Pro-|-Leu-Gly-Pro in a small molecule substrate of microbial collagenase.. Its function is as follows. Zinc protease that induces hemorrhage. Functionally, inhibits platelet aggregation induced by ADP, thrombin, and collagen. Acts by inhibiting fibrinogen interaction with platelet receptors GPIIb/GPIIIa (ITGA2B/ITGB3). In Protobothrops flavoviridis (Habu), this protein is Zinc metalloproteinase/disintegrin.